The primary structure comprises 126 residues: MAILGLGTDIVEIARIAAVVERSGDQLARRVLAPAEWQQYLTHAQRVRYLAKRFAVKEAAAKALGTGIRQGLAFAQFEVANDTLGKPRLILHGRAAELAADLGIASLHVSLADERRYACATVIAEG.

2 residues coordinate Mg(2+): aspartate 9 and glutamate 58.

Belongs to the P-Pant transferase superfamily. AcpS family. It depends on Mg(2+) as a cofactor.

It localises to the cytoplasm. The enzyme catalyses apo-[ACP] + CoA = holo-[ACP] + adenosine 3',5'-bisphosphate + H(+). Transfers the 4'-phosphopantetheine moiety from coenzyme A to a Ser of acyl-carrier-protein. This chain is Holo-[acyl-carrier-protein] synthase, found in Edwardsiella ictaluri (strain 93-146).